The primary structure comprises 312 residues: UDP-N-acetylenolpyruvoylglucosamine reductase (312 aa).

Residues 33 to 199 (RVGGKAEWYC…TGATLQLLPG (167 aa)) enclose the FAD-binding PCMH-type domain. R178 is an active-site residue. Catalysis depends on S229, which acts as the Proton donor. E299 is a catalytic residue.

This sequence belongs to the MurB family. It depends on FAD as a cofactor.

It localises to the cytoplasm. It carries out the reaction UDP-N-acetyl-alpha-D-muramate + NADP(+) = UDP-N-acetyl-3-O-(1-carboxyvinyl)-alpha-D-glucosamine + NADPH + H(+). It functions in the pathway cell wall biogenesis; peptidoglycan biosynthesis. Functionally, cell wall formation. The protein is UDP-N-acetylenolpyruvoylglucosamine reductase of Synechococcus sp. (strain JA-3-3Ab) (Cyanobacteria bacterium Yellowstone A-Prime).